A 274-amino-acid polypeptide reads, in one-letter code: Rhamnulose-1-phosphate aldolase (274 aa).

E117 is an active-site residue. 3 residues coordinate Zn(2+): H141, H143, and H212.

This sequence belongs to the aldolase class II family. RhaD subfamily. Homotetramer. The cofactor is Zn(2+).

It is found in the cytoplasm. It catalyses the reaction L-rhamnulose 1-phosphate = (S)-lactaldehyde + dihydroxyacetone phosphate. Its pathway is carbohydrate degradation; L-rhamnose degradation; glycerone phosphate from L-rhamnose: step 3/3. Its function is as follows. Catalyzes the reversible cleavage of L-rhamnulose-1-phosphate to dihydroxyacetone phosphate (DHAP) and L-lactaldehyde. The polypeptide is Rhamnulose-1-phosphate aldolase (Escherichia coli O81 (strain ED1a)).